A 204-amino-acid chain; its full sequence is FMN-dependent NADH:quinone oxidoreductase (204 aa).

FMN-binding positions include Ser10 and 16–18 (SKS).

Belongs to the azoreductase type 1 family. As to quaternary structure, homodimer. FMN is required as a cofactor.

The enzyme catalyses 2 a quinone + NADH + H(+) = 2 a 1,4-benzosemiquinone + NAD(+). It carries out the reaction N,N-dimethyl-1,4-phenylenediamine + anthranilate + 2 NAD(+) = 2-(4-dimethylaminophenyl)diazenylbenzoate + 2 NADH + 2 H(+). In terms of biological role, quinone reductase that provides resistance to thiol-specific stress caused by electrophilic quinones. Its function is as follows. Also exhibits azoreductase activity. Catalyzes the reductive cleavage of the azo bond in aromatic azo compounds to the corresponding amines. This Ruegeria pomeroyi (strain ATCC 700808 / DSM 15171 / DSS-3) (Silicibacter pomeroyi) protein is FMN-dependent NADH:quinone oxidoreductase.